Consider the following 752-residue polypeptide: Complement C2 (752 aa).

The first 20 residues, 1-20 (MGPLMVLFCLLFLYPGLADS), serve as a signal peptide directing secretion. 3 Sushi domains span residues 22-86 (PSCP…VCKP), 87-146 (VRCP…VCDN), and 149-206 (GHCP…ICRQ). 6 cysteine pairs are disulfide-bonded: cysteine 24/cysteine 64, cysteine 51/cysteine 84, cysteine 89/cysteine 131, cysteine 117/cysteine 144, cysteine 151/cysteine 191, and cysteine 177/cysteine 204. An N-linked (GlcNAc...) asparagine glycan is attached at asparagine 29. The N-linked (GlcNAc...) asparagine glycan is linked to asparagine 112. The VWFA domain occupies 254-452 (NLYLLLDCSQ…KALHQVFEHM (199 aa)). The MIDAS-like motif motif lies at 260 to 264 (DCSQS). Serine 262 and serine 264 together coordinate Mg(2+). Residues asparagine 290 and asparagine 333 are each glycosylated (N-linked (GlcNAc...) asparagine). Threonine 337 is a Mg(2+) binding site. Disulfide bonds link cysteine 463-cysteine 581, cysteine 492-cysteine 508, and cysteine 584-cysteine 600. A Peptidase S1 domain is found at 464-744 (GVGNMSANAS…MQPWLRQHLG (281 aa)). N-linked (GlcNAc...) asparagine glycans are attached at residues asparagine 467 and asparagine 471. Residues histidine 507 and aspartate 561 each act as charge relay system in the active site. Asparagine 621 carries an N-linked (GlcNAc...) asparagine glycan. 2 cysteine pairs are disulfide-bonded: cysteine 638–cysteine 665 and cysteine 675–cysteine 705. Serine 679 serves as the catalytic Charge relay system.

Belongs to the peptidase S1 family. Serine protease component of the C3 convertase, also named C4bC2b, composed of the serine protease complement C2b and complement C4b. Serine protease component of the C5 convertase, also named C4bC2bC3b, composed of the serine protease complement C2b, complement C3b, as well as complement C4b. The cofactor is Mg(2+). Requires Mn(2+) as cofactor. Cleaved and activated by different proteases depending on the complement pathway to generate complement C2a and serine protease complement C2b chains. Cleaved and activated by C1S following activation by the classical complement system. Cleaved and activated by MASP2 following activation by the lectin complement system. Cleaved and activated by GZMK following activation by the GZMK complement system.

The protein resides in the secreted. It localises to the cell surface. The catalysed reaction is Selective cleavage of Arg-|-Ser bond in complement component C3 alpha-chain to form C3a and C3b, and Arg-|-Xaa bond in complement component C5 alpha-chain to form C5a and C5b.. Its function is as follows. Precursor of the catalytic component of the C3 and C5 convertase complexes, which are part of the complement pathway, a cascade of proteins that leads to phagocytosis and breakdown of pathogens and signaling that strengthens the adaptive immune system. Component C2 is part of the classical, lectin and GZMK complement systems. In terms of biological role, catalytic component of the complement C3 and C5 convertase complexes. Following complement activation, recruited to the surface of pathogens by complement C4b opsonin to form the C3 convertase, or C3b and C4b opsonins to form the C5 convertase. As part of the C3 convertase, cleaves and activate C3 into C3a anaphylatoxin and C3b opsonin, the next components of the complement pathways. As part of the C5 convertase, cleaves and activate C5 into C5a anaphylatoxin and C5b component of the membrane attack complex. The chain is Complement C2 from Pongo pygmaeus (Bornean orangutan).